Here is a 1357-residue protein sequence, read N- to C-terminus: DNA-directed RNA polymerase subunit beta (1357 aa).

This sequence belongs to the RNA polymerase beta chain family. In terms of assembly, the RNAP catalytic core consists of 2 alpha, 1 beta, 1 beta' and 1 omega subunit. When a sigma factor is associated with the core the holoenzyme is formed, which can initiate transcription.

It carries out the reaction RNA(n) + a ribonucleoside 5'-triphosphate = RNA(n+1) + diphosphate. In terms of biological role, DNA-dependent RNA polymerase catalyzes the transcription of DNA into RNA using the four ribonucleoside triphosphates as substrates. The chain is DNA-directed RNA polymerase subunit beta from Acinetobacter baumannii (strain ATCC 17978 / DSM 105126 / CIP 53.77 / LMG 1025 / NCDC KC755 / 5377).